A 656-amino-acid polypeptide reads, in one-letter code: uncharacterized protein (656 aa).

Disordered regions lie at residues 1-41 and 60-88; these read MMAT…ESEG and SNKV…HNLE. Low complexity predominate over residues 22–36; the sequence is SDSSDSGSDVSFFSV. Ser39 carries the phosphoserine modification. Positions 62–78 are enriched in basic and acidic residues; that stretch reads KVEKDSDSEQRGRKKET.

It localises to the cytoplasm. It is found in the mitochondrion. This is an uncharacterized protein from Saccharomyces cerevisiae (strain ATCC 204508 / S288c) (Baker's yeast).